The primary structure comprises 177 residues: dCTP deaminase (177 aa).

DCTP is bound by residues 100 to 105 (RSSIAR) and D116. E126 functions as the Proton donor/acceptor in the catalytic mechanism. Y159 and Q166 together coordinate dCTP.

The protein belongs to the dCTP deaminase family. Homotrimer.

It carries out the reaction dCTP + H2O + H(+) = dUTP + NH4(+). It participates in pyrimidine metabolism; dUMP biosynthesis; dUMP from dCTP (dUTP route): step 1/2. In terms of biological role, catalyzes the deamination of dCTP to dUTP. This Korarchaeum cryptofilum (strain OPF8) protein is dCTP deaminase.